Here is a 262-residue protein sequence, read N- to C-terminus: Phosphomannomutase 1 (262 aa).

N-acetylalanine is present on Ala-2. The active-site Nucleophile is Asp-19. 2 residues coordinate Mg(2+): Asp-19 and Asp-21. The Proton donor/acceptor role is filled by Asp-21. Alpha-D-mannose 1-phosphate-binding residues include Arg-28, Arg-132, Arg-143, Arg-150, Met-186, Ser-188, and Asp-190. 4 residues coordinate Mg(2+): Asn-218, Tyr-230, Asp-232, and Thr-235. Ser-242 is modified (phosphoserine).

Belongs to the eukaryotic PMM family. Homodimer. Mg(2+) serves as cofactor. In terms of tissue distribution, present in brain, where it is restricted to neuronal cell bodies. Present at lower levels in pancreas, liver, lung, gonads, uterus, adrenal glands and pituitary (at protein level). Undetectable in intestine.

The protein localises to the cytoplasm. It catalyses the reaction alpha-D-mannose 1-phosphate = D-mannose 6-phosphate. Its pathway is nucleotide-sugar biosynthesis; GDP-alpha-D-mannose biosynthesis; alpha-D-mannose 1-phosphate from D-fructose 6-phosphate: step 2/2. With respect to regulation, IMP, a metabolite whose concentration is elevated in anoxia, inhibits phosphomannomutase and phosphoglucomutase activities and strongly enhances glucose-1,6-bisphosphatase activity. Involved in the synthesis of the GDP-mannose and dolichol-phosphate-mannose required for a number of critical mannosyl transfer reactions. In addition, may be responsible for the degradation of glucose-1,6-bisphosphate in ischemic brain. This Mus musculus (Mouse) protein is Phosphomannomutase 1 (Pmm1).